The sequence spans 693 residues: Adhesion G-protein coupled receptor G1 (693 aa).

Positions 1–25 are cleaved as a signal peptide; that stretch reads MTPQSLLQTTLFLLSLLFLVQGAHG. 26–33 contributes to the heparin binding site; it reads RGHREDFR. Residues 26-401 lie on the Extracellular side of the membrane; sequence RGHREDFRFC…SVEVDAVHKH (376 aa). Disulfide bonds link Cys-35-Cys-91 and Cys-121-Cys-177. Asn-39, Asn-148, and Asn-171 each carry an N-linked (GlcNAc...) asparagine glycan. 190-200 contacts heparin; it reads LKHPQKASRRP. The region spanning 224–395 is the GAIN-B domain; that stretch reads DMVSFEEDRI…AVLMVSSVEV (172 aa). N-linked (GlcNAc...) asparagine glycans are attached at residues Asn-234, Asn-303, Asn-324, and Asn-341. Cystine bridges form between Cys-346/Cys-377 and Cys-366/Cys-379. The tract at residues 346–395 is GPS; it reads CVFWVEDPTLSSPGHWSSAGCETVRRETQTSCFCNHLTYFAVLMVSSVEV. The tract at residues 384-397 is stachel; it reads YFAVLMVSSVEVDA. A helical transmembrane segment spans residues 402–424; that stretch reads YLSLLSYVGCVVSALACLVTIAA. Topologically, residues 425–437 are cytoplasmic; it reads YLCSRVPLPCRRK. The chain crosses the membrane as a helical span at residues 438–460; sequence PRDYTIKVHMNLLLAVFLLDTSF. The Extracellular segment spans residues 461–465; sequence LLSEP. Residues 466 to 495 form a helical membrane-spanning segment; that stretch reads VALTGSEAGCRASAIFLHFSLLTCLSWMGL. The cysteines at positions 475 and 562 are disulfide-linked. Over 496-510 the chain is Cytoplasmic; the sequence is EGYNLYRLVVEVFGT. A helical membrane pass occupies residues 511–533; the sequence is YVPGYLLKLSAMGWGFPIFLVTL. Residues 534–562 are Extracellular-facing; that stretch reads VALVDVDNYGPIILAVHRTPEGVIYPSMC. A helical transmembrane segment spans residues 563–588; sequence WIRDSLVSYITNLGLFSLVFLFNMAM. At 589–602 the chain is on the cytoplasmic side; that stretch reads LATMVVQILRLRPH. The helical transmembrane segment at 603–624 threads the bilayer; the sequence is TQKWSHVLTLLGLSLVLGLPWA. Residues 625–628 lie on the Extracellular side of the membrane; sequence LIFF. The helical transmembrane segment at 629-654 threads the bilayer; sequence SFASGTFQLVVLYLFSIITSFQGFLI. Over 655–693 the chain is Cytoplasmic; that stretch reads FIWYWSMRLQARGGPSPLKSNSDSARLPISSGSTSSSRI. A disordered region spans residues 670–693; the sequence is SPLKSNSDSARLPISSGSTSSSRI. Positions 684–693 are enriched in low complexity; sequence SSGSTSSSRI.

This sequence belongs to the G-protein coupled receptor 2 family. LN-TM7 subfamily. In terms of assembly, heterodimer of 2 chains generated by proteolytic processing; the large extracellular N-terminal fragment (ADGRG1 NT) and the membrane-bound C-terminal fragment (ADGRG1-CT) predominantly remain associated and non-covalently linked. ADGRG1 NT self-associates in a trans-trans manner; the homophilic interaction enhances receptor signaling. Interacts with TGM2. Interacts with heparin; leading to the reduction of ADGRG1 shedding. Interacts with COL3A1. Part of a GPCR-tetraspanin complex at least consisting of ADGRG1, CD81, eventually CD9, and GNA11 in which CD81 is enhancing the association of ADGRG1 with GNA11. Autoproteolytically cleaved into 2 fragments; the large extracellular N-terminal fragment (ADGRG1 NT) and the membrane-bound C-terminal fragment (ADGRG1 CT) predominantly remain associated and non-covalently linked. Shedding to yield the secreted ADGRG1 N-terminal fragment seems to involve metalloprotease(s). Post-translationally, N-glycosylated. Contains sialic acid residues. In terms of processing, ubiquitinated. Undergoes polyubiquitination upon activation. In terms of tissue distribution, widely distributed with highest levels found in thyroid gland, brain and heart. Expressed in a great number of tumor cells. Expression is down-regulated in different tumors from highly metastatic cells.

It is found in the cell membrane. The protein localises to the secreted. Its subcellular location is the membrane raft. With respect to regulation, forms a heterodimer of 2 chains generated by proteolytic processing that remain associated through non-covalent interactions mediated by the GAIN-B domain. In the inactivated receptor, the Stachel sequence (also named stalk) is embedded in the GAIN-B domain, where it adopts a beta-strand conformation. On activation, the Stachel moves into the 7 transmembrane region and adopts a twisted hook-shaped configuration that forms contacts within the receptor, leading to coupling of a G-alpha protein, which activates signaling. The cleaved GAIN-B and N-terminal domains can then dissociate from the rest of the receptor. Its function is as follows. Adhesion G-protein coupled receptor (aGPCR) for steroid hormone 17alpha-hydroxypregnenolone (17-OH), which is involved in cell adhesion and cell-cell interactions. Ligand binding causes a conformation change that triggers signaling via guanine nucleotide-binding proteins (G proteins) and modulates the activity of downstream effectors, such as RhoA pathway. ADGRG1 is coupled to G(12) and/or G(13) G proteins (GNA12 and GNA13, respectively) and mediates the activation Rho small GTPases. Acts as a potent suppressor of ferroptosis: binding to 17-OH-binding initiates signaling that down-regulates CD36 and alleviates ferroptosis-induced liver injury. Ligand-binding also induces cell adhesion activity via association with proteins such as collagen III/COL3A1 and TGM2. Mediates cell matrix adhesion in developing neurons and hematopoietic stem cells. Involved in cortical development, specifically in maintenance of the pial basement membrane integrity and in cortical lamination: association with COL3A1 in the developing brain inhibits neuronal migration via activation of the RhoA pathway. Together with TGM2, acts as a regulator of myelination and myelin repair in oligodendrocyte precursor cells. Acts as a hemostatic sensor of shear force: G protein-coupled receptor signaling is activated in response to shear force in platelets, promoting G(13) G protein signaling, and platelet shape change and aggregation in a COL3A1-dependent manner. Acts as an inhibitor of VEGFA production thereby inhibiting angiogenesis through a signaling pathway mediated by PRKCA. Plays a role in the maintenance of hematopoietic stem cells in bone marrow niche. Plays an essential role in testis development. The polypeptide is Adhesion G-protein coupled receptor G1 (Homo sapiens (Human)).